Reading from the N-terminus, the 221-residue chain is MVPPNPAHQPARRTQPQLQPQSQPRAQPLPGRRMNPVLCIIVALVLLGLLVGLAILITYLTLRPKRLIYTVEAASVQEFAIGNNDDHINAKFSYVIKSYNPEKHVSVRYHSMRISTAHHNQSVAHKNISPFKQRPKNETRIETQLVSHNVALSKFNARDLRAEKSKGTIEMEVYITARVSYKTWIFRSRRRTLKAVCTPVMINVTSSSLDGFQRVLCKTRL.

The disordered stretch occupies residues 1–30; that stretch reads MVPPNPAHQPARRTQPQLQPQSQPRAQPLP. The span at 12–25 shows a compositional bias: polar residues; the sequence is RRTQPQLQPQSQPR. The helical transmembrane segment at 37–57 threads the bilayer; sequence VLCIIVALVLLGLLVGLAILI.

It localises to the membrane. This is an uncharacterized protein from Arabidopsis thaliana (Mouse-ear cress).